Consider the following 272-residue polypeptide: Elongation factor Ts (272 aa).

The interval 86–89 is involved in Mg(2+) ion dislocation from EF-Tu; that stretch reads TDFV.

This sequence belongs to the EF-Ts family.

It localises to the cytoplasm. Functionally, associates with the EF-Tu.GDP complex and induces the exchange of GDP to GTP. It remains bound to the aminoacyl-tRNA.EF-Tu.GTP complex up to the GTP hydrolysis stage on the ribosome. The polypeptide is Elongation factor Ts (Blochmanniella pennsylvanica (strain BPEN)).